The chain runs to 618 residues: 2-succinyl-5-enolpyruvyl-6-hydroxy-3-cyclohexene-1-carboxylate synthase (618 aa).

Residues 192–215 are disordered; it reads DPVAERGRDGPYVDVTPGSPEPGD.

This sequence belongs to the TPP enzyme family. MenD subfamily. As to quaternary structure, homodimer. Mg(2+) is required as a cofactor. Mn(2+) serves as cofactor. Requires thiamine diphosphate as cofactor.

It catalyses the reaction isochorismate + 2-oxoglutarate + H(+) = 5-enolpyruvoyl-6-hydroxy-2-succinyl-cyclohex-3-ene-1-carboxylate + CO2. Its pathway is quinol/quinone metabolism; 1,4-dihydroxy-2-naphthoate biosynthesis; 1,4-dihydroxy-2-naphthoate from chorismate: step 2/7. It participates in quinol/quinone metabolism; menaquinone biosynthesis. In terms of biological role, catalyzes the thiamine diphosphate-dependent decarboxylation of 2-oxoglutarate and the subsequent addition of the resulting succinic semialdehyde-thiamine pyrophosphate anion to isochorismate to yield 2-succinyl-5-enolpyruvyl-6-hydroxy-3-cyclohexene-1-carboxylate (SEPHCHC). The protein is 2-succinyl-5-enolpyruvyl-6-hydroxy-3-cyclohexene-1-carboxylate synthase of Halorubrum lacusprofundi (strain ATCC 49239 / DSM 5036 / JCM 8891 / ACAM 34).